The following is a 347-amino-acid chain: Leukocyte cell-derived chemotaxin 1 (347 aa).

Residues 1–29 (MAEGSEKVPIARAGPEDVEQGLPPAYTAA) are disordered. The helical transmembrane segment at 45–65 (VLIAGALLLLAGAIGAFYFWK) threads the bilayer. One can recognise a BRICHOS domain in the interval 103 to 200 (GSGSEEAVEV…LCGDLPIFWL (98 aa)). A disulfide bond links C130 and C192. Residues 208–281 (KQRERREMKR…DNPYNQLEGE (74 aa)) are disordered. A propeptide spanning residues 210-213 (RERR) is cleaved from the precursor. The segment covering 240 to 276 (TRSTPTQLTQDLGPQSNETRPMQQESDQTLNPDNPYN) has biased composition (polar residues). A glycan (N-linked (GlcNAc...) asparagine) is linked at N256. 4 disulfides stabilise this stretch: C295–C299, C296–C336, C306–C330, and C310–C326.

It belongs to the chondromodulin-1 family. In terms of processing, after cleavage, the post-translationally modified ChM-I is secreted as a glycoprotein. As to expression, expressed in the cartilage and in fetal precartilaginous tissues as well as in heart and eye.

It is found in the secreted. Its subcellular location is the extracellular space. The protein resides in the extracellular matrix. The protein localises to the endomembrane system. Functionally, bifunctional growth regulator. May contribute to the rapid growth of cartilage and vascular invasion prior to the replacement of cartilage by bone during endochondral bone development. Plays a role as antiangiogenic factor in cardiac valves to suppress neovascularization. In Gallus gallus (Chicken), this protein is Leukocyte cell-derived chemotaxin 1.